The following is a 722-amino-acid chain: Polyribonucleotide nucleotidyltransferase (722 aa).

Positions 495 and 501 each coordinate Mg(2+). Residues 562–621 (PRLLSFRIDPELIGTVIGPGGRTIKGITERTNTKIDIEDGGIVTIASHDGVAAEEAQKII) enclose the KH domain. One can recognise an S1 motif domain in the interval 631-699 (GEIFTGSITR…NRGRINLTLR (69 aa)). Polar residues predominate over residues 701 to 711 (VSQNNNDMNYP). Residues 701 to 722 (VSQNNNDMNYPQPTPTPVAPLN) form a disordered region. Pro residues predominate over residues 712–722 (QPTPTPVAPLN).

The protein belongs to the polyribonucleotide nucleotidyltransferase family. Mg(2+) serves as cofactor.

The protein resides in the cytoplasm. It carries out the reaction RNA(n+1) + phosphate = RNA(n) + a ribonucleoside 5'-diphosphate. Its function is as follows. Involved in mRNA degradation. Catalyzes the phosphorolysis of single-stranded polyribonucleotides processively in the 3'- to 5'-direction. This Prochlorococcus marinus (strain MIT 9211) protein is Polyribonucleotide nucleotidyltransferase.